Here is a 71-residue protein sequence, read N- to C-terminus: Large ribosomal subunit protein bL28 (71 aa).

Belongs to the bacterial ribosomal protein bL28 family.

In Finegoldia magna (strain ATCC 29328 / DSM 20472 / WAL 2508) (Peptostreptococcus magnus), this protein is Large ribosomal subunit protein bL28.